The sequence spans 272 residues: Small ribosomal subunit biogenesis GTPase RsgA (272 aa).

The region spanning 56–207 is the CP-type G domain; it reads KNILIRPKVA…IIDTPGFSSI (152 aa). GTP-binding positions include 105–108 and 151–159; these read TKAD and GQSGVGKTT. Residues Cys230, Cys235, His237, and Cys245 each contribute to the Zn(2+) site.

Belongs to the TRAFAC class YlqF/YawG GTPase family. RsgA subfamily. As to quaternary structure, monomer. Associates with 30S ribosomal subunit, binds 16S rRNA. Zn(2+) is required as a cofactor.

It is found in the cytoplasm. Functionally, one of several proteins that assist in the late maturation steps of the functional core of the 30S ribosomal subunit. Helps release RbfA from mature subunits. May play a role in the assembly of ribosomal proteins into the subunit. Circularly permuted GTPase that catalyzes slow GTP hydrolysis, GTPase activity is stimulated by the 30S ribosomal subunit. The polypeptide is Small ribosomal subunit biogenesis GTPase RsgA (Mycoplasmopsis pulmonis (strain UAB CTIP) (Mycoplasma pulmonis)).